The primary structure comprises 214 residues: Immunoglobulin lambda-like polypeptide 5 (214 aa).

The N-terminal stretch at 1–35 (MRPKTGQVGCETPEELGPGPRQRWPLLLLGLAMVA) is a signal peptide. The segment at 98–109 (VFGTGTKVTVLG) is j region. A c region region spans residues 110–214 (QPKANPTVTL…EKTVAPTECS (105 aa)). Residues 115 to 209 (PTVTLFPPSS…EGSTVEKTVA (95 aa)) form the Ig-like C1-type domain. Cys-136 and Cys-195 are joined by a disulfide.

In terms of tissue distribution, contrary to IGLL1, not expressed in pre-B-cells.

It is found in the secreted. This chain is Immunoglobulin lambda-like polypeptide 5 (IGLL5), found in Homo sapiens (Human).